A 327-amino-acid polypeptide reads, in one-letter code: Movement protein (327 aa).

Residues 297–327 (SASSSNTENELARVSQNIDLLKNKLKEICGE) adopt a coiled-coil conformation.

Belongs to the caulimoviridae movement protein family. Homotrimer, through the coiled-coil domain. Interacts with VAP. May interact (via N-terminus) with host prenylated Rab acceptor protein 1D (PRA1D).

Its subcellular location is the host cell junction. The protein localises to the host plasmodesma. In terms of biological role, transports viral genome to neighboring plant cells directly through plasmosdesmata, without any budding. The movement protein allows efficient cell to cell propagation, by bypassing the host cell wall barrier. Acts by forming tubules structures that increase the size exclusion limit (SEL) of plasmodesmata, thereby allowing viral ribonucleocapsids to spread directly to neighboring cells. This is Movement protein from Arabidopsis thaliana (Mouse-ear cress).